Reading from the N-terminus, the 720-residue chain is Ciliated left-right organizer metallopeptidase (720 aa).

The first 25 residues, 1–25 (MTVSFSMFQIYRLVWLSFMTSMCLS), serve as a signal peptide directing secretion. Residues 26-668 (ACIHDSVLQE…ALYVSHMLYS (643 aa)) are Extracellular-facing. Zn(2+) is bound at residue His-243. The active site involves Glu-244. Residues His-247 and His-322 each contribute to the Zn(2+) site. Residues 669–689 (YVIGGGCCAVCGAAIIFALFW) form a helical membrane-spanning segment. The Cytoplasmic portion of the chain corresponds to 690-720 (YKLRRQFLRVGSSYPPETSNHERPQIPADLV).

The protein belongs to the peptidase M8 family. Requires Zn(2+) as cofactor.

It localises to the membrane. Putative metalloprotease playing a role in the process of LR patterning. This Xenopus laevis (African clawed frog) protein is Ciliated left-right organizer metallopeptidase (cirop).